A 465-amino-acid polypeptide reads, in one-letter code: Putative adhesin P1-like protein MPN_286 (465 aa).

3 disordered regions span residues 9–48 (GNGH…STFS), 59–78 (QGTL…PKWP), and 93–167 (WRND…LPPN). Residues 21 to 37 (SNSSTSGVTTQGQQSQN) show a composition bias toward low complexity. Positions 38-48 (ASGTEPASTFS) are enriched in polar residues. The span at 111–131 (TSATGSGQQGSSSGTTNSAGN) shows a compositional bias: low complexity. Residues 135 to 144 (LKQDKVDKSG) show a composition bias toward basic and acidic residues. Positions 145–156 (DSVTVAETTSGD) are enriched in polar residues. A compositionally biased stretch (low complexity) spans 157-167 (NLTNYTNLPPN).

It belongs to the adhesin P1 family.

The protein is Putative adhesin P1-like protein MPN_286 of Mycoplasma pneumoniae (strain ATCC 29342 / M129 / Subtype 1) (Mycoplasmoides pneumoniae).